The sequence spans 157 residues: Transcriptional repressor NrdR (157 aa).

A zinc finger lies at 3-34 (CPFCRHPDSRVVDSRTSDDGLSIRRRRQCPEC). Residues 46 to 136 (LSVIKRNGVV…VYQGFDSLDD (91 aa)) enclose the ATP-cone domain.

This sequence belongs to the NrdR family. The cofactor is Zn(2+).

Its function is as follows. Negatively regulates transcription of bacterial ribonucleotide reductase nrd genes and operons by binding to NrdR-boxes. This chain is Transcriptional repressor NrdR, found in Clavibacter sepedonicus (Clavibacter michiganensis subsp. sepedonicus).